The primary structure comprises 64 residues: Conotoxin Pn-B01122 (64 aa).

The N-terminal stretch at M1–A22 is a signal peptide. Positions R23–N48 are excised as a propeptide.

The protein belongs to the conotoxin T superfamily. Post-translationally, contains 2 disulfide bonds that can be either 'C1-C3, C2-C4' or 'C1-C4, C2-C3', since these disulfide connectivities have been observed for conotoxins with cysteine framework V (for examples, see AC P0DQQ7 and AC P81755). In terms of tissue distribution, expressed by the venom duct.

The protein resides in the secreted. This is Conotoxin Pn-B01122 from Conus pennaceus (Feathered cone).